Here is a 106-residue protein sequence, read N- to C-terminus: Large ribosomal subunit protein cL38 (106 aa).

The N-terminal 39 residues, 1–39 (MSVSAIFGTGIVTVAASPVLRQFQVPKLGNGGGLGMVIE), are a transit peptide targeting the chloroplast. A disordered region spans residues 42–70 (SRPQKKSTAHHRKTRPKKTQPWDIKRKPT). Residues 44–59 (PQKKSTAHHRKTRPKK) are compositionally biased toward basic residues.

The protein belongs to the chloroplast-specific ribosomal protein cL38 family. As to quaternary structure, part of the 50S ribosomal subunit.

Its subcellular location is the plastid. The protein resides in the chloroplast. This is Large ribosomal subunit protein cL38 (PSRP6) from Arabidopsis thaliana (Mouse-ear cress).